A 752-amino-acid polypeptide reads, in one-letter code: Phosphoribosylformylglycinamidine synthase subunit PurL (752 aa).

The active site involves H58. The ATP site is built by Y61 and K103. E105 contributes to the Mg(2+) binding site. Substrate-binding positions include 106 to 109 (SHNH) and R128. Catalysis depends on H107, which acts as the Proton acceptor. D129 provides a ligand contact to Mg(2+). A substrate-binding site is contributed by Q253. Residue D281 participates in Mg(2+) binding. Position 325–327 (325–327 (ESQ)) interacts with substrate. Positions 513 and 550 each coordinate ATP. N551 serves as a coordination point for Mg(2+). S553 contributes to the substrate binding site.

It belongs to the FGAMS family. In terms of assembly, monomer. Part of the FGAM synthase complex composed of 1 PurL, 1 PurQ and 2 PurS subunits.

Its subcellular location is the cytoplasm. It carries out the reaction N(2)-formyl-N(1)-(5-phospho-beta-D-ribosyl)glycinamide + L-glutamine + ATP + H2O = 2-formamido-N(1)-(5-O-phospho-beta-D-ribosyl)acetamidine + L-glutamate + ADP + phosphate + H(+). It functions in the pathway purine metabolism; IMP biosynthesis via de novo pathway; 5-amino-1-(5-phospho-D-ribosyl)imidazole from N(2)-formyl-N(1)-(5-phospho-D-ribosyl)glycinamide: step 1/2. Its function is as follows. Part of the phosphoribosylformylglycinamidine synthase complex involved in the purines biosynthetic pathway. Catalyzes the ATP-dependent conversion of formylglycinamide ribonucleotide (FGAR) and glutamine to yield formylglycinamidine ribonucleotide (FGAM) and glutamate. The FGAM synthase complex is composed of three subunits. PurQ produces an ammonia molecule by converting glutamine to glutamate. PurL transfers the ammonia molecule to FGAR to form FGAM in an ATP-dependent manner. PurS interacts with PurQ and PurL and is thought to assist in the transfer of the ammonia molecule from PurQ to PurL. The protein is Phosphoribosylformylglycinamidine synthase subunit PurL of Streptomyces avermitilis (strain ATCC 31267 / DSM 46492 / JCM 5070 / NBRC 14893 / NCIMB 12804 / NRRL 8165 / MA-4680).